Here is a 109-residue protein sequence, read N- to C-terminus: Tyrosine-protein phosphatase 6 (109 aa).

The 109-residue stretch at 1-109 folds into the Tyrosine-protein phosphatase domain; that stretch reads YNINVIVMVC…SEDETTPLCV (109 aa). Residue D76 participates in substrate binding.

The protein belongs to the protein-tyrosine phosphatase family.

It carries out the reaction O-phospho-L-tyrosyl-[protein] + H2O = L-tyrosyl-[protein] + phosphate. The sequence is that of Tyrosine-protein phosphatase 6 (STY-6) from Styela plicata (Wrinkled sea squirt).